The chain runs to 222 residues: 3-demethoxyubiquinol 3-hydroxylase (222 aa).

Residues Glu71, Glu101, His104, Glu153, Glu185, and His188 each coordinate Fe cation.

This sequence belongs to the COQ7 family. Requires Fe cation as cofactor.

It localises to the cell membrane. It carries out the reaction a 5-methoxy-2-methyl-3-(all-trans-polyprenyl)benzene-1,4-diol + AH2 + O2 = a 3-demethylubiquinol + A + H2O. It participates in cofactor biosynthesis; ubiquinone biosynthesis. Functionally, catalyzes the hydroxylation of 2-nonaprenyl-3-methyl-6-methoxy-1,4-benzoquinol during ubiquinone biosynthesis. The protein is 3-demethoxyubiquinol 3-hydroxylase of Bordetella pertussis (strain Tohama I / ATCC BAA-589 / NCTC 13251).